We begin with the raw amino-acid sequence, 224 residues long: Large ribosomal subunit protein bL25 (224 aa).

The segment at 190 to 224 (EPAPAAEGAAPAEGAAAAAAGGKPAAKTAKPAAKK) is disordered.

The protein belongs to the bacterial ribosomal protein bL25 family. CTC subfamily. Part of the 50S ribosomal subunit; part of the 5S rRNA/L5/L18/L25 subcomplex. Contacts the 5S rRNA. Binds to the 5S rRNA independently of L5 and L18.

In terms of biological role, this is one of the proteins that binds to the 5S RNA in the ribosome where it forms part of the central protuberance. This is Large ribosomal subunit protein bL25 from Variovorax paradoxus (strain S110).